The chain runs to 973 residues: Piwi-like protein 2 (973 aa).

The disordered stretch occupies residues 28–65 (WPQASKPLDPALGRGAPAGRGHVFGKPEEPSTQRGPAQ). A compositionally biased stretch (low complexity) spans 34 to 48 (PLDPALGRGAPAGRG). At R47 the chain carries Symmetric dimethylarginine. Residues R76 and R97 each carry the omega-N-methylarginine; by PRMT5; alternate modification. The residue at position 76 (R76) is a Symmetric dimethylarginine; by PRMT5; alternate. A Symmetric dimethylarginine; alternate modification is found at R97. R102 carries the symmetric dimethylarginine; by PRMT5; alternate modification. Residue R102 is modified to Omega-N-methylarginine; alternate. Symmetric dimethylarginine occurs at positions 146 and 158. The interval 162–199 (GISREVDKPPCTFSTPSRGPPQLSSPPALPQSPLHSPD) is disordered. Residue R165 is modified to Symmetric dimethylarginine; by PRMT5. Residues 389–502 (CVLDVMHAIY…LLPELSFMTG (114 aa)) form the PAZ domain. The residue at position 551 (R551) is a Symmetric dimethylarginine; by PRMT5. Residues 668-959 (MVVCIIMGPR…LAFLSGHILH (292 aa)) enclose the Piwi domain. Active-site residues include D745, E783, D815, and H948.

It belongs to the argonaute family. Piwi subfamily. Interacts with DDX4, MAEL, EIF3A, EIF4E, EIF4G, PRMT5 and WDR77. Associates with EIF4E- and EIF4G-containing m7G cap-binding complexes. Interacts (when methylated on arginine residues) with TDRD1 and TDRKH/TDRD2. Interacts with TDRD12. Component of the PET complex, at least composed of EXD1, PIWIL2, TDRD12 and piRNAs. Interacts with MOV10L1. Interacts with GPAT2. Interacts with TEX19. Interacts with GSK3B. Interacts (via PIWI domain) with BMAL1 and CLOCK. Interacts with TEX15. Mg(2+) is required as a cofactor. Arginine methylation by PRMT5 is required for the interaction with Tudor domain-containing protein TDRD1 and subsequent localization to the meiotic nuage, also named P granule. As to expression, expressed in adult testis and in most tumors.

The protein localises to the cytoplasm. Its function is as follows. Endoribonuclease that plays a central role during spermatogenesis by repressing transposable elements and preventing their mobilization, which is essential for the germline integrity. Plays an essential role in meiotic differentiation of spermatocytes, germ cell differentiation and in self-renewal of spermatogonial stem cells. Acts via the piRNA metabolic process, which mediates the repression of transposable elements during meiosis by forming complexes composed of piRNAs and Piwi proteins and govern the methylation and subsequent repression of transposons. During piRNA biosynthesis, plays a key role in the piRNA amplification loop, also named ping-pong amplification cycle, by acting as a 'slicer-competent' piRNA endoribonuclease that cleaves primary piRNAs, which are then loaded onto 'slicer-incompetent' PIWIL4. PIWIL2 slicing produces a pre-miRNA intermediate, which is then processed in mature piRNAs, and as well as a 16 nucleotide by-product that is degraded. Required for PIWIL4/MIWI2 nuclear localization and association with secondary piRNAs antisense. Besides their function in transposable elements repression, piRNAs are probably involved in other processes during meiosis such as translation regulation. Indirectly modulates expression of genes such as PDGFRB, SLC2A1, ITGA6, GJA7, THY1, CD9 and STRA8. When overexpressed, acts as an oncogene by inhibition of apoptosis and promotion of proliferation in tumors. Represses circadian rhythms by promoting the stability and activity of core clock components BMAL1 and CLOCK by inhibiting GSK3B-mediated phosphorylation and ubiquitination-dependent degradation of these proteins. This chain is Piwi-like protein 2 (PIWIL2), found in Homo sapiens (Human).